A 525-amino-acid polypeptide reads, in one-letter code: Neuropilin and tolloid-like protein 2 (525 aa).

The N-terminal stretch at 1-22 is a signal peptide; sequence MALEQLCAVLKVLLITVLVVEG. Residues 23 to 347 are Extracellular-facing; it reads IAVAQKTQDG…GLFEQITKTH (325 aa). Cystine bridges form between C45–C72, C100–C122, C177–C207, C234–C256, C297–C309, C304–C322, and C316–C331. CUB domains are found at residues 45 to 159 and 177 to 292; these read CGIW…YSFI and CQFE…FTSF. An LDL-receptor class A domain is found at 296-332; it reads PCTSSTFFCHSNMCINNSLVCNGVQNCAYPWDENHCK. N311 is a glycosylation site (N-linked (GlcNAc...) asparagine). Residues 348–368 form a helical membrane-spanning segment; sequence GTIIGITSGIVLVLLIISILV. The Cytoplasmic segment spans residues 369-525; the sequence is QVKQPRKKVM…SAQASISIDF (157 aa). Phosphoserine is present on S409.

Interacts with GRIK2 and GRIK3, but neither with AMPA-nor with NMDA-sensitive glutamate receptors. In terms of processing, N-glycosylated. In terms of tissue distribution, expressed in brain tissues, including cerebellar granule cells (at protein level).

It is found in the cell membrane. In terms of biological role, accessory subunit of neuronal kainate-sensitive glutamate receptors, GRIK2 and GRIK3. Increases kainate-receptor channel activity, slowing the decay kinetics of the receptors, without affecting their expression at the cell surface, and increasing the open probability of the receptor channels. Modulates the agonist sensitivity of kainate receptors. Slows the decay of kainate receptor-mediated excitatory postsynaptic currents (EPSCs), thus directly influencing synaptic transmission. The sequence is that of Neuropilin and tolloid-like protein 2 (Neto2) from Mus musculus (Mouse).